The chain runs to 231 residues: Regulatory protein VanR (231 aa).

Residues 4-117 form the Response regulatory domain; the sequence is KILIVDDEHE…ELIARVKAQL (114 aa). D53 carries the post-translational modification 4-aspartylphosphate. The ompR/PhoB-type DNA-binding region spans 131–231; that stretch reads ENVIVHSGLV…VWGVGYKIEK (101 aa).

Monomer. In terms of processing, phosphorylated by VanS. Dephosphorylated by VanS. Can be phosphorylated nonenzymatically by acetyl-phosphate.

It localises to the cytoplasm. In terms of biological role, member of the two-component regulatory system VanS/VanR. Binds to the promoter regions of target genes, including vanH and vanR; phosphorylation of VanR increases binding affinity to the vanH and vanR promoters significantly. DNA binding may be inhibited by the cognate sensor protein, VanS. Activates the transcription of vanH, vanA and vanX in response to vancomycin which results in vancomycin resistance. Involved in conferring vancomycin resistance. This is Regulatory protein VanR (vanR) from Enterococcus faecium (Streptococcus faecium).